A 276-amino-acid chain; its full sequence is Formamidopyrimidine-DNA glycosylase (276 aa).

Proline 2 (schiff-base intermediate with DNA) is an active-site residue. The active-site Proton donor is glutamate 3. Lysine 58 acts as the Proton donor; for beta-elimination activity in catalysis. 3 residues coordinate DNA: histidine 92, arginine 111, and arginine 154. The FPG-type zinc finger occupies 239–273; that stretch reads HAYQRTGDPCERCGTPIQRIVVGQRGTHFCPKCQV. Residue arginine 263 is the Proton donor; for delta-elimination activity of the active site.

It belongs to the FPG family. In terms of assembly, monomer. The cofactor is Zn(2+).

It catalyses the reaction Hydrolysis of DNA containing ring-opened 7-methylguanine residues, releasing 2,6-diamino-4-hydroxy-5-(N-methyl)formamidopyrimidine.. The enzyme catalyses 2'-deoxyribonucleotide-(2'-deoxyribose 5'-phosphate)-2'-deoxyribonucleotide-DNA = a 3'-end 2'-deoxyribonucleotide-(2,3-dehydro-2,3-deoxyribose 5'-phosphate)-DNA + a 5'-end 5'-phospho-2'-deoxyribonucleoside-DNA + H(+). Involved in base excision repair of DNA damaged by oxidation or by mutagenic agents. Acts as a DNA glycosylase that recognizes and removes damaged bases. Has a preference for oxidized purines, such as 7,8-dihydro-8-oxoguanine (8-oxoG). Has AP (apurinic/apyrimidinic) lyase activity and introduces nicks in the DNA strand. Cleaves the DNA backbone by beta-delta elimination to generate a single-strand break at the site of the removed base with both 3'- and 5'-phosphates. This chain is Formamidopyrimidine-DNA glycosylase, found in Ligilactobacillus salivarius (strain UCC118) (Lactobacillus salivarius).